We begin with the raw amino-acid sequence, 106 residues long: Violacin-A (106 aa).

The first 29 residues, 1-29, serve as a signal peptide directing secretion; that stretch reads MDAQKMKMVIGLVLVATTAFALMIPAASA. Positions 30 to 79 are excised as a propeptide; that stretch reads VDDFITRRAYDNLVKSGAIKDIPVMAKTIISNPVLEEGMLTYYTNKKLGD. 3 disulfides stabilise this stretch: C84-C98, C88-C100, and C93-C105.

This sequence belongs to the cyclotide family. Moebius subfamily. In terms of processing, violacin-A is not a cyclic peptide.

Probably participates in a plant defense mechanism. Has low hemolytic activity. This Viola odorata (Sweet violet) protein is Violacin-A.